A 202-amino-acid polypeptide reads, in one-letter code: Prostamide/prostaglandin F synthase (202 aa).

Position 108 is a phosphotyrosine (Y108).

This sequence belongs to the peroxiredoxin-like PRXL2 family. Prostamide/prostaglandin F synthase subfamily.

The protein localises to the cytoplasm. It is found in the cytosol. The catalysed reaction is prostaglandin H2 + [thioredoxin]-dithiol = prostaglandin F2alpha + [thioredoxin]-disulfide. The enzyme catalyses prostamide F2alpha + [thioredoxin]-disulfide = prostamide H2 + [thioredoxin]-dithiol. Its function is as follows. Catalyzes the reduction of prostaglandin-ethanolamide H(2) (prostamide H(2)) to prostamide F(2alpha) with NADPH as proton donor. Also able to reduce prostaglandin H(2) to prostaglandin F(2alpha). This chain is Prostamide/prostaglandin F synthase (PRXL2B), found in Sus scrofa (Pig).